Here is a 1914-residue protein sequence, read N- to C-terminus: Zinc finger protein Rlf (1914 aa).

Position 41 is a phosphoserine (Ser41). The segment covering 521–540 has biased composition (basic and acidic residues); sequence KQYRRRDLTDQHKEKRDKKP. The segment at 521 to 541 is disordered; the sequence is KQYRRRDLTDQHKEKRDKKPI. The segment at 582–604 adopts a C2H2-type 1 zinc-finger fold; it reads YTCPVCIKKFKRKEMFVPHVMEH. Lys622 is covalently cross-linked (Glycyl lysine isopeptide (Lys-Gly) (interchain with G-Cter in SUMO2)). Ser632 and Ser634 each carry phosphoserine. 5 C2H2-type zinc fingers span residues 671–696, 714–736, 742–766, 771–795, and 801–825; these read YPCPGTDCSRVFKQFKYLSVHLKAEH, EKCTYCRRHFMSAFHLREHEQVH, YMCVSIDCYARFGSVNELLNHKQKH, YKCELNGCNIVFSDLGQLYHHEAQH, and YTCNFLGCKKFYYSKIEYQNHLSMH. A Glycyl lysine isopeptide (Lys-Gly) (interchain with G-Cter in SUMO2) cross-link involves residue Lys839. The segment at 882–907 is disordered; that stretch reads TETAENLKENSDSNSSDQLSHSSSAS. Positions 893–907 are enriched in low complexity; the sequence is DSNSSDQLSHSSSAS. The C2H2-type 7 zinc finger occupies 954–979; sequence FTCGFDGCGSTYKNARGMQKHLRKVH. The segment at 993-1028 is disordered; the sequence is LFPSLGNEHNQTTEKLDAEPKPCSDTNSDSPDEGLD. The segment covering 1003–1014 has biased composition (basic and acidic residues); that stretch reads QTTEKLDAEPKP. 2 C2H2-type zinc fingers span residues 1127-1152 and 1172-1195; these read FFCELQGCKYEFVTREALLMHYLKKH and FQCHICQRSFTRKTHLRIHYKNKH. Positions 1231 to 1290 are disordered; it reads LGGDPSSNSEKPHCHPKKDECSSETDLESSCEETESKTSDISSPIGSHREEQEGREGRGS. Residues 1240 to 1251 are compositionally biased toward basic and acidic residues; it reads EKPHCHPKKDEC. A compositionally biased stretch (acidic residues) spans 1252-1263; the sequence is SSETDLESSCEE. Residues 1277-1289 show a composition bias toward basic and acidic residues; it reads SHREEQEGREGRG. 5 C2H2-type zinc fingers span residues 1310–1335, 1362–1387, 1407–1432, 1444–1469, and 1549–1574; these read FHCIHKTCNSSFTNLKGLIRHYRTVH, FACKYKECNKRFLCSKALAKHCSDSH, FSCNQPQCPAVFYTFNKLKHHLMEQH, IHCDLNGCGQIFTHRSNYSQHVYYRH, and YPCMVQGCLSVVKLESSIVRHYKRTH. Lys1423 participates in a covalent cross-link: Glycyl lysine isopeptide (Lys-Gly) (interchain with G-Cter in SUMO2). Residues Lys1599 and Lys1611 each participate in a glycyl lysine isopeptide (Lys-Gly) (interchain with G-Cter in SUMO2) cross-link. The segment at 1620–1654 is disordered; it reads SERTEHSHSPGDSSAPIQNTDCCHSSERDGGQKGC. Polar residues predominate over residues 1629 to 1642; the sequence is PGDSSAPIQNTDCC. Lys1696 participates in a covalent cross-link: Glycyl lysine isopeptide (Lys-Gly) (interchain with G-Cter in SUMO2). Residues 1725-1757 are disordered; it reads ESETRQHSSGQENTVKNPTHVPKENFRKHSQPR. Polar residues predominate over residues 1731–1741; it reads HSSGQENTVKN. A Glycyl lysine isopeptide (Lys-Gly) (interchain with G-Cter in SUMO2) cross-link involves residue Lys1762. Residues 1783-1807 are disordered; sequence KEDDFDDWEPSEHLTLSNSSQSSND. Residues 1796–1807 are compositionally biased toward polar residues; it reads LTLSNSSQSSND.

This sequence belongs to the krueppel C2H2-type zinc-finger protein family. As to quaternary structure, interacts with RIT1 and RIT2. As to expression, widely expressed in fetal and adult tissues.

It is found in the nucleus. Functionally, may be involved in transcriptional regulation. This is Zinc finger protein Rlf (RLF) from Homo sapiens (Human).